Here is a 555-residue protein sequence, read N- to C-terminus: CTP synthase (555 aa).

Positions 1-265 (MTRYIFITGG…GNRVCEKLNI (265 aa)) are amidoligase domain. Position 13 (Ser13) interacts with CTP. A UTP-binding site is contributed by Ser13. ATP contacts are provided by residues 14 to 19 (SLGKGI) and Asp71. 2 residues coordinate Mg(2+): Asp71 and Glu139. CTP-binding positions include 146 to 148 (DIE), 186 to 191 (KTKPTQ), and Lys222. Residues 186–191 (KTKPTQ) and Lys222 each bind UTP. Residues 290–541 (TVAVVGKYVD…IKAGLAAKEA (252 aa)) form the Glutamine amidotransferase type-1 domain. L-glutamine is bound at residue Gly351. Cys378 (nucleophile; for glutamine hydrolysis) is an active-site residue. L-glutamine contacts are provided by residues 379 to 382 (LGMQ), Glu402, and Arg469. Active-site residues include His514 and Glu516.

The protein belongs to the CTP synthase family. In terms of assembly, homotetramer.

The catalysed reaction is UTP + L-glutamine + ATP + H2O = CTP + L-glutamate + ADP + phosphate + 2 H(+). It catalyses the reaction L-glutamine + H2O = L-glutamate + NH4(+). It carries out the reaction UTP + NH4(+) + ATP = CTP + ADP + phosphate + 2 H(+). It participates in pyrimidine metabolism; CTP biosynthesis via de novo pathway; CTP from UDP: step 2/2. With respect to regulation, allosterically activated by GTP, when glutamine is the substrate; GTP has no effect on the reaction when ammonia is the substrate. The allosteric effector GTP functions by stabilizing the protein conformation that binds the tetrahedral intermediate(s) formed during glutamine hydrolysis. Inhibited by the product CTP, via allosteric rather than competitive inhibition. Catalyzes the ATP-dependent amination of UTP to CTP with either L-glutamine or ammonia as the source of nitrogen. Regulates intracellular CTP levels through interactions with the four ribonucleotide triphosphates. This chain is CTP synthase, found in Coxiella burnetii (strain CbuK_Q154) (Coxiella burnetii (strain Q154)).